Consider the following 274-residue polypeptide: Glucosamine-6-phosphate deaminase (274 aa).

The Proton acceptor; for enolization step role is filled by D71. D140 acts as the For ring-opening step in catalysis. Residue H142 is the Proton acceptor; for ring-opening step of the active site. Residue E147 is the For ring-opening step of the active site.

Belongs to the glucosamine/galactosamine-6-phosphate isomerase family. NagB subfamily.

It catalyses the reaction alpha-D-glucosamine 6-phosphate + H2O = beta-D-fructose 6-phosphate + NH4(+). It functions in the pathway amino-sugar metabolism; N-acetylneuraminate degradation; D-fructose 6-phosphate from N-acetylneuraminate: step 5/5. Catalyzes the reversible isomerization-deamination of glucosamine 6-phosphate (GlcN6P) to form fructose 6-phosphate (Fru6P) and ammonium ion. This Fusobacterium nucleatum subsp. nucleatum (strain ATCC 25586 / DSM 15643 / BCRC 10681 / CIP 101130 / JCM 8532 / KCTC 2640 / LMG 13131 / VPI 4355) protein is Glucosamine-6-phosphate deaminase.